A 590-amino-acid chain; its full sequence is Beta-glucosidase 29 (590 aa).

Residues 1–21 (MNVQIFILLLIISWLTPKITS) form the signal peptide. Residues Gln48, His151, and 196-197 (NE) each bind a beta-D-glucoside. The active-site Proton donor is the Glu197. Cys216 and Cys224 are joined by a disulfide. N-linked (GlcNAc...) asparagine glycosylation is found at Asn255 and Asn331. Tyr341 provides a ligand contact to a beta-D-glucoside. The N-linked (GlcNAc...) asparagine glycan is linked to Asn371. Residues Glu413, Trp463, 470 to 471 (EW), and Phe479 contribute to the a beta-D-glucoside site. Glu413 functions as the Nucleophile in the catalytic mechanism. 2 N-linked (GlcNAc...) asparagine glycosylation sites follow: Asn522 and Asn553.

The protein belongs to the glycosyl hydrolase 1 family.

The catalysed reaction is Hydrolysis of terminal, non-reducing beta-D-glucosyl residues with release of beta-D-glucose.. In Arabidopsis thaliana (Mouse-ear cress), this protein is Beta-glucosidase 29.